The chain runs to 281 residues: Bifunctional protein FolD (281 aa).

NADP(+) is bound by residues 164–166 (GRS), Ser-189, and Ile-230.

The protein belongs to the tetrahydrofolate dehydrogenase/cyclohydrolase family. In terms of assembly, homodimer.

The enzyme catalyses (6R)-5,10-methylene-5,6,7,8-tetrahydrofolate + NADP(+) = (6R)-5,10-methenyltetrahydrofolate + NADPH. It carries out the reaction (6R)-5,10-methenyltetrahydrofolate + H2O = (6R)-10-formyltetrahydrofolate + H(+). The protein operates within one-carbon metabolism; tetrahydrofolate interconversion. Its function is as follows. Catalyzes the oxidation of 5,10-methylenetetrahydrofolate to 5,10-methenyltetrahydrofolate and then the hydrolysis of 5,10-methenyltetrahydrofolate to 10-formyltetrahydrofolate. The polypeptide is Bifunctional protein FolD (Pelagibacter ubique (strain HTCC1062)).